A 672-amino-acid chain; its full sequence is tRNA 5-methylaminomethyl-2-thiouridine biosynthesis bifunctional protein MnmC (672 aa).

The interval 1 to 243 (MTSIKNAELG…KREMIAGSME (243 aa)) is tRNA (mnm(5)s(2)U34)-methyltransferase. The tract at residues 269–672 (IGGGIASAAL…LRKGKAITEL (404 aa)) is FAD-dependent cmnm(5)s(2)U34 oxidoreductase.

In the N-terminal section; belongs to the methyltransferase superfamily. tRNA (mnm(5)s(2)U34)-methyltransferase family. It in the C-terminal section; belongs to the DAO family. It depends on FAD as a cofactor.

The protein localises to the cytoplasm. The catalysed reaction is 5-aminomethyl-2-thiouridine(34) in tRNA + S-adenosyl-L-methionine = 5-methylaminomethyl-2-thiouridine(34) in tRNA + S-adenosyl-L-homocysteine + H(+). Its function is as follows. Catalyzes the last two steps in the biosynthesis of 5-methylaminomethyl-2-thiouridine (mnm(5)s(2)U) at the wobble position (U34) in tRNA. Catalyzes the FAD-dependent demodification of cmnm(5)s(2)U34 to nm(5)s(2)U34, followed by the transfer of a methyl group from S-adenosyl-L-methionine to nm(5)s(2)U34, to form mnm(5)s(2)U34. The polypeptide is tRNA 5-methylaminomethyl-2-thiouridine biosynthesis bifunctional protein MnmC (Vibrio campbellii (strain ATCC BAA-1116)).